Reading from the N-terminus, the 535-residue chain is Putative subtilisin-like proteinase 2 (535 aa).

An N-terminal signal peptide occupies residues 1–17; it reads MFFVGVAVLAALQSVWG. One can recognise a Peptidase S8 domain in the interval 221-475; the sequence is NWIFRVLQIK…IPRLGCKGRI (255 aa). Catalysis depends on charge relay system residues Asp-255 and His-277. Cys-369 and Cys-400 form a disulfide bridge. Ser-420 (charge relay system) is an active-site residue. A helical transmembrane segment spans residues 489-509; sequence IVPLVFVVLITSALLYLLLIG.

The protein belongs to the peptidase S8 family.

Its subcellular location is the membrane. May be involved in the degradation of proteins for nutrient acquisition or possess a regulatory function by proteolytic activation of proproteins. This chain is Putative subtilisin-like proteinase 2 (SPL2), found in Encephalitozoon cuniculi (strain GB-M1) (Microsporidian parasite).